Consider the following 299-residue polypeptide: Tyrosine recombinase XerD (299 aa).

Residues 3–88 (QQDNPLIEQF…AMRRLFQYLY (86 aa)) enclose the Core-binding (CB) domain. Residues 109-293 (RLPKDLSEAQ…ATERLRQLHQ (185 aa)) enclose the Tyr recombinase domain. Residues arginine 149, lysine 173, histidine 245, arginine 248, and histidine 271 contribute to the active site. Tyrosine 280 (O-(3'-phospho-DNA)-tyrosine intermediate) is an active-site residue.

Belongs to the 'phage' integrase family. XerD subfamily. Forms a cyclic heterotetrameric complex composed of two molecules of XerC and two molecules of XerD, in which XerC interacts with XerD via its C-terminal region, XerD interacts with XerC via its C-terminal region and so on.

It localises to the cytoplasm. With respect to regulation, ftsK may regulate the catalytic switch between XerC and XerD in the heterotetrameric complex during the two steps of the recombination process. Functionally, site-specific tyrosine recombinase, which acts by catalyzing the cutting and rejoining of the recombining DNA molecules. Binds cooperatively to specific DNA consensus sequences that are separated from XerC binding sites by a short central region, forming the heterotetrameric XerC-XerD complex that recombines DNA substrates. The complex is essential to convert dimers of the bacterial chromosome into monomers to permit their segregation at cell division. It also contributes to the segregational stability of plasmids. In the complex XerD specifically exchanges the bottom DNA strands. The polypeptide is Tyrosine recombinase XerD (Yersinia pestis).